Consider the following 45-residue polypeptide: Mu-conotoxin-like Cal 12.1.2c (45 aa).

Intrachain disulfides connect Cys3-Cys16, Cys11-Cys28, Cys18-Cys33, and Cys27-Cys39. Pro23 is subject to 4-hydroxyproline. Trp37 and Trp38 each carry 6'-bromotryptophan. The residue at position 40 (Pro40) is a 4-hydroxyproline. 6'-bromotryptophan is present on Trp44.

In terms of tissue distribution, expressed by the venom duct.

It is found in the secreted. In terms of biological role, mu-conotoxins block voltage-gated sodium channels. This toxin reversibly blocks voltage-gated sodium channel in cephalopods, with no alteration in the voltage dependence of sodium conductance or on the kinetics of inactivation. In Californiconus californicus (California cone), this protein is Mu-conotoxin-like Cal 12.1.2c.